Here is a 260-residue protein sequence, read N- to C-terminus: Exosome complex component Rrp4 (260 aa).

The S1 motif domain occupies asparagine 59 to arginine 128. The 59-residue stretch at arginine 136 to leucine 194 folds into the KH domain.

Belongs to the RRP4 family. In terms of assembly, component of the archaeal exosome complex. Forms a trimer of Rrp4 and/or Csl4 subunits. The trimer associates with a hexameric ring-like arrangement composed of 3 Rrp41-Rrp42 heterodimers.

The protein resides in the cytoplasm. Non-catalytic component of the exosome, which is a complex involved in RNA degradation. Increases the RNA binding and the efficiency of RNA degradation. Confers strong poly(A) specificity to the exosome. This Methanosarcina mazei (strain ATCC BAA-159 / DSM 3647 / Goe1 / Go1 / JCM 11833 / OCM 88) (Methanosarcina frisia) protein is Exosome complex component Rrp4.